The sequence spans 372 residues: Alanine dehydrogenase 2 (372 aa).

The active site involves His-95. Residue 169 to 199 participates in NAD(+) binding; that stretch reads KVTIIGGGQAGTNAAKIALGLGADVTILDVN.

Belongs to the AlaDH/PNT family.

The enzyme catalyses L-alanine + NAD(+) + H2O = pyruvate + NH4(+) + NADH + H(+). It participates in amino-acid degradation; L-alanine degradation via dehydrogenase pathway; NH(3) and pyruvate from L-alanine: step 1/1. In terms of biological role, may play a role in cell wall synthesis as L-alanine is an important constituent of the peptidoglycan layer. The chain is Alanine dehydrogenase 2 (ald2) from Staphylococcus aureus (strain COL).